A 279-amino-acid polypeptide reads, in one-letter code: Bifunctional protein FolD (279 aa).

NADP(+) contacts are provided by residues 162-164 (GRS), serine 187, and isoleucine 228.

It belongs to the tetrahydrofolate dehydrogenase/cyclohydrolase family. In terms of assembly, homodimer.

It carries out the reaction (6R)-5,10-methylene-5,6,7,8-tetrahydrofolate + NADP(+) = (6R)-5,10-methenyltetrahydrofolate + NADPH. The catalysed reaction is (6R)-5,10-methenyltetrahydrofolate + H2O = (6R)-10-formyltetrahydrofolate + H(+). Its pathway is one-carbon metabolism; tetrahydrofolate interconversion. Functionally, catalyzes the oxidation of 5,10-methylenetetrahydrofolate to 5,10-methenyltetrahydrofolate and then the hydrolysis of 5,10-methenyltetrahydrofolate to 10-formyltetrahydrofolate. This Acidiphilium cryptum (strain JF-5) protein is Bifunctional protein FolD.